Consider the following 417-residue polypeptide: NADH-quinone oxidoreductase subunit D (417 aa).

It belongs to the complex I 49 kDa subunit family. NDH-1 is composed of 14 different subunits. Subunits NuoB, C, D, E, F, and G constitute the peripheral sector of the complex.

It is found in the cell inner membrane. The enzyme catalyses a quinone + NADH + 5 H(+)(in) = a quinol + NAD(+) + 4 H(+)(out). NDH-1 shuttles electrons from NADH, via FMN and iron-sulfur (Fe-S) centers, to quinones in the respiratory chain. The immediate electron acceptor for the enzyme in this species is believed to be ubiquinone. Couples the redox reaction to proton translocation (for every two electrons transferred, four hydrogen ions are translocated across the cytoplasmic membrane), and thus conserves the redox energy in a proton gradient. The polypeptide is NADH-quinone oxidoreductase subunit D (Francisella tularensis subsp. tularensis (strain FSC 198)).